A 397-amino-acid polypeptide reads, in one-letter code: Iripin-2 (397 aa).

The first 21 residues, 1 to 21, serve as a signal peptide directing secretion; sequence MEDFKMKTLAAFLSLLVLCWA. Asparagine 109 and asparagine 270 each carry an N-linked (GlcNAc...) asparagine glycan.

This sequence belongs to the serpin family. In terms of assembly, interacts with mouse MCPT4. In terms of tissue distribution, female salivary gland. Ovary. Midgut.

It localises to the secreted. Its function is as follows. Serine protease inhibitor that modulates blood feeding of ticks on vertebrate species. Inhibits host trypsin, thrombin (F2), alpha-chymotrypsin, cathepsin G (CTSG) and mast cell chymase (CMA1). Inhibits host cathepsin G- and thrombin-induced platelet aggregation. Inhibits acute inflammation in the host. Suppresses neutrophil recruitment in inflamed area. Does not inhibit host plasmin (PLG), factor Xa (F10), factor XIa (F11), elastase and proteinase 3/myeloblastin (PRTN3). In terms of biological role, (Microbial infection) Inhibits IL6 production by mouse splenic dendritic cells in response to Borrelia burgdorferi exposure. Decreases levels of STAT3 phosphorylation in mouse splenic dendritic cells in response to Borrelia burgdorferi exposure and in Borrelia-primed CD4+ T-lymphocytes. Inhibits differentiation of mouse Th17 cells, a subset of CD4+ T-lymphocytes that play a crucial role in protection against extracellular bacteria, in response to Borrelia burgdorferi exposure via inhibition of the IL6/STAT3 signaling pathway. The chain is Iripin-2 from Ixodes ricinus (Common tick).